The primary structure comprises 329 residues: UDP-3-O-acylglucosamine N-acyltransferase (329 aa).

The active-site Proton acceptor is H224.

Belongs to the transferase hexapeptide repeat family. LpxD subfamily. In terms of assembly, homotrimer.

The enzyme catalyses a UDP-3-O-[(3R)-3-hydroxyacyl]-alpha-D-glucosamine + a (3R)-hydroxyacyl-[ACP] = a UDP-2-N,3-O-bis[(3R)-3-hydroxyacyl]-alpha-D-glucosamine + holo-[ACP] + H(+). Its pathway is bacterial outer membrane biogenesis; LPS lipid A biosynthesis. Its function is as follows. Catalyzes the N-acylation of UDP-3-O-acylglucosamine using 3-hydroxyacyl-ACP as the acyl donor. Is involved in the biosynthesis of lipid A, a phosphorylated glycolipid that anchors the lipopolysaccharide to the outer membrane of the cell. This chain is UDP-3-O-acylglucosamine N-acyltransferase, found in Albidiferax ferrireducens (strain ATCC BAA-621 / DSM 15236 / T118) (Rhodoferax ferrireducens).